A 145-amino-acid polypeptide reads, in one-letter code: Peptide methionine sulfoxide reductase MsrB (145 aa).

Residues 4 to 127 (SEELKQRIGD…NSAALKFIPY (124 aa)) form the MsrB domain. The Nucleophile role is filled by cysteine 116.

The protein belongs to the MsrB Met sulfoxide reductase family.

The catalysed reaction is L-methionyl-[protein] + [thioredoxin]-disulfide + H2O = L-methionyl-(R)-S-oxide-[protein] + [thioredoxin]-dithiol. The sequence is that of Peptide methionine sulfoxide reductase MsrB from Streptococcus pyogenes serotype M6 (strain ATCC BAA-946 / MGAS10394).